Consider the following 675-residue polypeptide: PTS system glucose-specific EIICBA component (675 aa).

A PTS EIIC type-1 domain is found at 3 to 414 (KKLFGQMQRI…FNYKTPGRED (412 aa)). 11 helical membrane passes run 16 to 36 (LMLPVAILPAAGLLLAIGTAF), 59 to 79 (MLTGAGGIIFDNLPIIFALGV), 81 to 101 (IGLAGGDGVAAIAAFVGFIIL), 126 to 146 (VLGIPTLQTGVFGGIIIGALA), 170 to 190 (FVPIMMATTSFILAFPMAIIW), 211 to 231 (LAVFLFGFIKRLLIPFGLHHI), 273 to 293 (FMQGEFPVMMFGLPAAALAIY), 303 to 323 (VVAGLMISAALTSFLTGITEP), 328 to 348 (FLFVAPFLFVIHAVLDGLSFL), 355 to 375 (VHLGYTFSGGFIDYVLLGILP), and 378 to 398 (TAWWLVIPVGIIYAVIYYFVF). One can recognise a PTS EIIB type-1 domain in the interval 425–506 (SQLPFDVLKA…AKIISGEITK (82 aa)). Cys447 functions as the Phosphocysteine intermediate; for EIIB activity in the catalytic mechanism. The PTS EIIA type-1 domain occupies 547 to 651 (DKVFSEKMMG…SIITPVIITN (105 aa)). His599 acts as the Tele-phosphohistidine intermediate; for EIIA activity in catalysis.

It localises to the cell membrane. The catalysed reaction is N(pros)-phospho-L-histidyl-[protein] + D-glucose(out) = D-glucose 6-phosphate(in) + L-histidyl-[protein]. The phosphoenolpyruvate-dependent sugar phosphotransferase system (sugar PTS), a major carbohydrate active transport system, catalyzes the phosphorylation of incoming sugar substrates concomitantly with their translocation across the cell membrane. This system is involved in glucose transport. The protein is PTS system glucose-specific EIICBA component (ptsG) of Staphylococcus epidermidis.